A 287-amino-acid chain; its full sequence is 2-dehydro-3-deoxyphosphooctonate aldolase (287 aa).

The protein belongs to the KdsA family.

It localises to the cytoplasm. The catalysed reaction is D-arabinose 5-phosphate + phosphoenolpyruvate + H2O = 3-deoxy-alpha-D-manno-2-octulosonate-8-phosphate + phosphate. Its pathway is carbohydrate biosynthesis; 3-deoxy-D-manno-octulosonate biosynthesis; 3-deoxy-D-manno-octulosonate from D-ribulose 5-phosphate: step 2/3. It participates in bacterial outer membrane biogenesis; lipopolysaccharide biosynthesis. This is 2-dehydro-3-deoxyphosphooctonate aldolase from Rhodopseudomonas palustris (strain ATCC BAA-98 / CGA009).